Here is a 582-residue protein sequence, read N- to C-terminus: Myoneurin (582 aa).

Residues 24-89 (CDCTIVIGEF…IYTGTLNLDS (66 aa)) form the BTB domain. The interval 169 to 197 (QGALAKKSSQTKKKKKAFNSPKTGQNKTV) is disordered. 2 short sequence motifs (nuclear localization signal) span residues 174 to 190 (KKSSQTKKKKKAFNSPK) and 257 to 262 (KRKRGK). Polar residues predominate over residues 188–197 (SPKTGQNKTV). Residue S289 is modified to Phosphoserine. Residues 302–324 (PMCNTRGKVFSEASSLRRHMRIH) form a C2H2-type 1; degenerate zinc finger. 6 C2H2-type zinc fingers span residues 330–352 (YVCHLCGKAFTQCNQLKTHVRTH), 358–381 (YKCELCDKGFAQKCQLVFHSRMHH), 387–409 (YKCDVCNLQFATSSNLKIHARKH), 415–437 (YVCDRCGQRFAQASTLTYHVRRH), 443–465 (YVCDTCGKAFAVSSSLITHSRKH), and 471–494 (FICELCGNSYTDIKNLKKHKTKVH). A disordered region spans residues 489-538 (HKTKVHSGADKTPDSSAEDHTLSEQDSIQKSPLSETMDVKPSDTTLPLAL). Positions 495 to 511 (SGADKTPDSSAEDHTLS) are enriched in basic and acidic residues. Positions 512-522 (EQDSIQKSPLS) are enriched in polar residues.

Belongs to the krueppel C2H2-type zinc-finger protein family.

The protein localises to the nucleus. The chain is Myoneurin (MYNN) from Pongo abelii (Sumatran orangutan).